Here is a 314-residue protein sequence, read N- to C-terminus: Putative gluconeogenesis factor (314 aa).

It belongs to the gluconeogenesis factor family.

The protein localises to the cytoplasm. Its function is as follows. Required for morphogenesis under gluconeogenic growth conditions. This chain is Putative gluconeogenesis factor, found in Thermotoga maritima (strain ATCC 43589 / DSM 3109 / JCM 10099 / NBRC 100826 / MSB8).